A 304-amino-acid chain; its full sequence is Protein phosphatase PTC7 homolog (304 aa).

A mitochondrion-targeting transit peptide spans 1–68 (MFSVLSYGRL…GDDACFVARH (68 aa)). Residues 69–299 (RSADVLGVAD…DDITVLLSIV (231 aa)) enclose the PPM-type phosphatase domain. 3 residues coordinate Mn(2+): Asp78, Gly79, and Asp223.

The protein belongs to the PP2C family. As to quaternary structure, interacts with FBXL4, BNIP3 and NIX; these interactions are important for ubiquitination and degradation of BNIP3 and NIX. The cofactor is Mg(2+). Requires Mn(2+) as cofactor. In terms of tissue distribution, expressed in keratinocytes (at protein level).

The protein localises to the mitochondrion matrix. The enzyme catalyses O-phospho-L-seryl-[protein] + H2O = L-seryl-[protein] + phosphate. It catalyses the reaction O-phospho-L-threonyl-[protein] + H2O = L-threonyl-[protein] + phosphate. Its activity is regulated as follows. Inhibited by sodium orthovanadate. In terms of biological role, protein phosphatase that plays an essential role in mitochondrial metabolism and biogenesis. Positively regulates biosynthesis of the ubiquinone, coenzyme Q. Dephosphorylates the ubiquinone biosynthesis protein COQ7 which is likely to lead to its activation. Serves as a crucial sensor for mitophagy, though the underlying mechanism remains ambiguous. May dephosphorylate BNIP3 and NIX and thereby directly regulates mitophagy receptor function and stability. Alternatively, promotes SCF-FBXL4-dependent ubiquitination and degradation of BNIP3 and NIX independently of its catalytic activity to restrain mitophagy. The polypeptide is Protein phosphatase PTC7 homolog (PPTC7) (Homo sapiens (Human)).